Reading from the N-terminus, the 861-residue chain is DNA mismatch repair protein MutS (861 aa).

An ATP-binding site is contributed by 616–623; sequence GPNMGGKS.

This sequence belongs to the DNA mismatch repair MutS family.

Functionally, this protein is involved in the repair of mismatches in DNA. It is possible that it carries out the mismatch recognition step. This protein has a weak ATPase activity. In Haemophilus influenzae (strain PittEE), this protein is DNA mismatch repair protein MutS.